Here is a 149-residue protein sequence, read N- to C-terminus: Transcription factor HY5-like (149 aa).

The interval 1 to 77 (MSLQRPNGNS…RRRGRNPVDK (77 aa)) is disordered. The tract at residues 23 to 36 (ESDEELLMVPDMEA) is interaction with COP1. Phosphoserine is present on S24. Residues 55–64 (ELDQTQNGVS) are compositionally biased toward polar residues. Residues 78-141 (EYRSLKRLLR…TMLRKMLINT (64 aa)) enclose the bZIP domain. The segment at 80 to 100 (RSLKRLLRNRVSAQQARERKK) is basic motif. Residues 106 to 134 (LESRANELQNNNDQLEEKISTLTNENTML) form a leucine-zipper region.

The protein belongs to the bZIP family. In terms of assembly, heterodimer; heterodimerizes with HY5 via the leucine-zipper domains. Interacts with COP1 WD40 domain. Interacts with BBX24/STO and BBX25/STH. Ubiquitinated by COP1. Ubiquitination takes place in darkness and leads to its subsequent degradation, thereby preventing the activation of photomorphogenesis signals.

It is found in the nucleus. In terms of biological role, transcription factor that promotes photomorphogenesis in light. Acts downstream of the light receptor network and directly affects transcription of light-induced genes. Specifically involved in the blue light specific pathway, suggesting that it participates in transmission of cryptochromes (CRY1 and CRY2) signals to downstream responses. In darkness, its degradation prevents the activation of light-induced genes. The protein is Transcription factor HY5-like (HYH) of Arabidopsis thaliana (Mouse-ear cress).